Here is a 303-residue protein sequence, read N- to C-terminus: Proteasome subunit beta (303 aa).

A propeptide spans 1–64 (MTWPDRDTSA…VTPSDAVPHG (64 aa)) (removed in mature form; by autocatalysis). The active-site Nucleophile is Thr65.

The protein belongs to the peptidase T1B family. In terms of assembly, the 20S proteasome core is composed of 14 alpha and 14 beta subunits that assemble into four stacked heptameric rings, resulting in a barrel-shaped structure. The two inner rings, each composed of seven catalytic beta subunits, are sandwiched by two outer rings, each composed of seven alpha subunits. The catalytic chamber with the active sites is on the inside of the barrel. Has a gated structure, the ends of the cylinder being occluded by the N-termini of the alpha-subunits. Is capped by the proteasome-associated ATPase, ARC.

The protein localises to the cytoplasm. It carries out the reaction Cleavage of peptide bonds with very broad specificity.. It functions in the pathway protein degradation; proteasomal Pup-dependent pathway. Its activity is regulated as follows. The formation of the proteasomal ATPase ARC-20S proteasome complex, likely via the docking of the C-termini of ARC into the intersubunit pockets in the alpha-rings, may trigger opening of the gate for substrate entry. Interconversion between the open-gate and close-gate conformations leads to a dynamic regulation of the 20S proteasome proteolysis activity. Its function is as follows. Component of the proteasome core, a large protease complex with broad specificity involved in protein degradation. This chain is Proteasome subunit beta, found in Mycolicibacterium gilvum (strain PYR-GCK) (Mycobacterium gilvum (strain PYR-GCK)).